Here is a 161-residue protein sequence, read N- to C-terminus: Allophycocyanin alpha chain (161 aa).

Asparagine 71 bears the N4-methylasparagine mark. Residue cysteine 81 participates in (2R,3E)-phycocyanobilin binding.

This sequence belongs to the phycobiliprotein family. As to quaternary structure, heterodimer of an alpha and a beta chain. Contains one covalently linked phycocyanobilin chromophore.

It localises to the plastid. It is found in the chloroplast thylakoid membrane. In terms of biological role, light-harvesting photosynthetic bile pigment-protein from the phycobiliprotein complex. Allophycocyanin has a maximum absorption at approximately 650 nanometers. In Galdieria sulphuraria (Red alga), this protein is Allophycocyanin alpha chain (apcA).